The primary structure comprises 508 residues: DDB1- and CUL4-associated factor 10 (508 aa).

The tract at residues 1-75 (MSSGHPSDNE…GSASGSGCRG (75 aa)) is disordered. Residues 7-17 (SDNEEPRADLL) show a composition bias toward basic and acidic residues. The span at 18–32 (REEEEEEEEEEDSDE) shows a compositional bias: acidic residues. Gly residues predominate over residues 63–75 (GGTGSASGSGCRG). WD repeat units follow at residues 126–165 (QTHGAVFNLEYSPDGSVLTVACEQTEVLLFDPVSSRHIKT), 169–207 (AHEDCVNNIRFLDNRLFATCSDDTTIALWDLRKLNSKVC), 211–250 (GHASWVKNIEYDTHTRLLVTSGFDGNVITWDTNRFTEDGC), and 256–295 (FHTRYLMRMRLTPDCSKMLISTSSGYLLILHDLDLTQSLE). The tract at residues 307-343 (PPLSTEGSSAGSRSGGPRHTIDNKNHPHREGLSPRNS) is disordered. The span at 325–338 (HTIDNKNHPHREGL) shows a compositional bias: basic and acidic residues. WD repeat units lie at residues 356–396 (DRGN…QEGA), 419–457 (VGRGYIKELCFSPDGRLICSPYGYGVRLLAFDENCAELV), and 475–508 (SHSDVVLTSKFSPTHCQFASGCLSGRVALYQPHF).

The protein belongs to the WD repeat DCAF10 family.

Its pathway is protein modification; protein ubiquitination. In terms of biological role, may function as a substrate receptor for CUL4-DDB1 E3 ubiquitin-protein ligase complex. The protein is DDB1- and CUL4-associated factor 10 (dcaf10) of Danio rerio (Zebrafish).